A 153-amino-acid polypeptide reads, in one-letter code: uncharacterized protein (153 aa).

A run of 2 helical transmembrane segments spans residues 16–36 (ILAC…ILEI) and 97–117 (ALTT…CIIC).

The protein localises to the membrane. This is an uncharacterized protein from Human herpesvirus 6A (strain Uganda-1102) (HHV-6 variant A).